A 445-amino-acid polypeptide reads, in one-letter code: Argininosuccinate synthase (445 aa).

Residues A17–S25 and A43 each bind ATP. An L-citrulline-binding site is contributed by Y99. ATP-binding residues include G129 and T131. Residues T131, N135, and D136 each coordinate L-aspartate. N135 contributes to the L-citrulline binding site. Residue D136 coordinates ATP. Residues R139 and S192 each contribute to the L-citrulline site. D194 lines the ATP pocket. Residues T201, E203, and E280 each coordinate L-citrulline.

It belongs to the argininosuccinate synthase family. Type 2 subfamily. Homotetramer.

Its subcellular location is the cytoplasm. The enzyme catalyses L-citrulline + L-aspartate + ATP = 2-(N(omega)-L-arginino)succinate + AMP + diphosphate + H(+). It participates in amino-acid biosynthesis; L-arginine biosynthesis; L-arginine from L-ornithine and carbamoyl phosphate: step 2/3. The protein is Argininosuccinate synthase of Rhodopseudomonas palustris (strain BisB5).